A 323-amino-acid chain; its full sequence is Cell division protein ZipA (323 aa).

Over 1-5 (MQELR) the chain is Periplasmic. The chain crosses the membrane as a helical span at residues 6–26 (FVLIVVGALAIAALLFHGLWT). At 27 to 323 (SKKEGKAKFG…QIVEFNAANA (297 aa)) the chain is on the cytoplasmic side. A disordered region spans residues 35 to 92 (FGNKPLGKLDVDQEDKDTPGQERDFAPDPEDDFEIIRKDRKEPDFGMENSFDNKFSSD). Composition is skewed to basic and acidic residues over residues 41–60 (GKLD…RDFA) and 68–78 (EIIRKDRKEPD).

It belongs to the ZipA family. Interacts with FtsZ via their C-terminal domains.

It localises to the cell inner membrane. Functionally, essential cell division protein that stabilizes the FtsZ protofilaments by cross-linking them and that serves as a cytoplasmic membrane anchor for the Z ring. Also required for the recruitment to the septal ring of downstream cell division proteins. In Vibrio campbellii (strain ATCC BAA-1116), this protein is Cell division protein ZipA.